The sequence spans 288 residues: Probable ketoamine kinase PM0587 (288 aa).

Residue 92–94 (EAL) coordinates ATP.

The protein belongs to the fructosamine kinase family.

Ketoamine kinase that phosphorylates ketoamines on the third carbon of the sugar moiety to generate ketoamine 3-phosphate. The polypeptide is Probable ketoamine kinase PM0587 (Pasteurella multocida (strain Pm70)).